Consider the following 162-residue polypeptide: Cytochrome c-type biogenesis protein CcmE (162 aa).

Topologically, residues 1–8 (MNPRRKKR) are cytoplasmic. A helical; Signal-anchor for type II membrane protein membrane pass occupies residues 9-29 (LTLAVALIGGVAAIASLLLYA). At 30–162 (LNSNLNLFYT…YSQQKAPDTK (133 aa)) the chain is on the periplasmic side. The heme site is built by histidine 131 and tyrosine 135. Positions 139–162 (EVAEAMGQKHEKLDYSQQKAPDTK) are disordered. The segment covering 153 to 162 (YSQQKAPDTK) has biased composition (polar residues).

The protein belongs to the CcmE/CycJ family.

It localises to the cell inner membrane. Its function is as follows. Heme chaperone required for the biogenesis of c-type cytochromes. Transiently binds heme delivered by CcmC and transfers the heme to apo-cytochromes in a process facilitated by CcmF and CcmH. The chain is Cytochrome c-type biogenesis protein CcmE from Shewanella putrefaciens (strain CN-32 / ATCC BAA-453).